Consider the following 217-residue polypeptide: MATGSHTATLLLAVALLGLPWPQEAGAFPAMPLSSLFANAVLRAQHLHQLAADTYKEFERAYIPEGQRYSIQNAQAAFCFSETIPAPTGKDEAQQRSDMELLRFSLLLIQSWLGPVQLLSRVFTNSLVLGTSDRVYEKLKDLEEGIQALMRELEDGSPRVGQILKQTYDKFDTNLRSDDALLKNYGLLSCFKKDLHKAETYLRVMKCRRFVESSCAF.

Residues 1-27 (MATGSHTATLLLAVALLGLPWPQEAGA) form the signal peptide. Residue histidine 46 participates in Zn(2+) binding. An intrachain disulfide couples cysteine 79 to cysteine 190. Phosphoserine is present on serine 132. Residue glutamate 199 coordinates Zn(2+). Cysteine 207 and cysteine 215 are disulfide-bonded.

The protein belongs to the somatotropin/prolactin family.

The protein localises to the secreted. Functionally, plays an important role in growth control. Its major role in stimulating body growth is to stimulate the liver and other tissues to secrete IGF1. It stimulates both the differentiation and proliferation of myoblasts. It also stimulates amino acid uptake and protein synthesis in muscle and other tissues. This chain is Somatotropin (GH1), found in Xanthonycticebus pygmaeus (Pygmy slow loris).